The sequence spans 211 residues: Uracil phosphoribosyltransferase (211 aa).

5-phospho-alpha-D-ribose 1-diphosphate is bound by residues arginine 78, arginine 103, and 130–138 (DPMLATGGT). Uracil is bound by residues isoleucine 195 and 200–202 (GDA). Aspartate 201 is a binding site for 5-phospho-alpha-D-ribose 1-diphosphate.

The protein belongs to the UPRTase family. Mg(2+) serves as cofactor.

The catalysed reaction is UMP + diphosphate = 5-phospho-alpha-D-ribose 1-diphosphate + uracil. It participates in pyrimidine metabolism; UMP biosynthesis via salvage pathway; UMP from uracil: step 1/1. Allosterically activated by GTP. Catalyzes the conversion of uracil and 5-phospho-alpha-D-ribose 1-diphosphate (PRPP) to UMP and diphosphate. In Paenarthrobacter aurescens (strain TC1), this protein is Uracil phosphoribosyltransferase.